The primary structure comprises 479 residues: Sulfate adenylyltransferase subunit 1 (479 aa).

A tr-type G domain is found at 25–239 (KSLLRFLTCG…EVLETVDIQR (215 aa)). The interval 34–41 (GSVDDGKS) is G1. 34 to 41 (GSVDDGKS) lines the GTP pocket. The tract at residues 92–96 (GITID) is G2. The interval 113–116 (DTPG) is G3. Residues 113–117 (DTPGH) and 168–171 (NKMD) contribute to the GTP site. The tract at residues 168-171 (NKMD) is G4. The G5 stretch occupies residues 206 to 208 (SAL).

This sequence belongs to the TRAFAC class translation factor GTPase superfamily. Classic translation factor GTPase family. CysN/NodQ subfamily. Heterodimer composed of CysD, the smaller subunit, and CysN.

It catalyses the reaction sulfate + ATP + H(+) = adenosine 5'-phosphosulfate + diphosphate. It functions in the pathway sulfur metabolism; hydrogen sulfide biosynthesis; sulfite from sulfate: step 1/3. Functionally, with CysD forms the ATP sulfurylase (ATPS) that catalyzes the adenylation of sulfate producing adenosine 5'-phosphosulfate (APS) and diphosphate, the first enzymatic step in sulfur assimilation pathway. APS synthesis involves the formation of a high-energy phosphoric-sulfuric acid anhydride bond driven by GTP hydrolysis by CysN coupled to ATP hydrolysis by CysD. This Salmonella paratyphi B (strain ATCC BAA-1250 / SPB7) protein is Sulfate adenylyltransferase subunit 1.